A 217-amino-acid polypeptide reads, in one-letter code: U2 snRNP component ist3 (217 aa).

The 79-residue stretch at 31–109 folds into the RRM domain; the sequence is AYIYIGNLDF…RLVRVDHVAS (79 aa). 2 disordered regions span residues 119–138 and 154–217; these read PANL…STIN and EVEQ…DLDG. Over residues 128–138 the composition is skewed to polar residues; the sequence is SGSSLSVSTIN. Serine 160 carries the post-translational modification Phosphoserine. 2 stretches are compositionally biased toward basic and acidic residues: residues 161-176 and 185-198; these read PKDE…DYIH and HESS…DSNR. Residues 199–217 are compositionally biased toward basic residues; that stretch reads HSRHHRRHSRSRRHRDLDG.

This sequence belongs to the IST3 family. Belongs to the 40S cdc5-associated complex (or cwf complex), a spliceosome sub-complex reminiscent of a late-stage spliceosome composed of the U2, U5 and U6 snRNAs and at least brr2, cdc5, cwf2/prp3, cwf3/syf1, cwf4/syf3, cwf5/ecm2, spp42/cwf6, cwf7/spf27, cwf8, cwf9, cwf10, cwf11, cwf12, prp45/cwf13, cwf14, cwf15, cwf16, cwf17, cwf18, cwf19, cwf20, cwf21, cwf22, cwf23, cwf24, cwf25, cwf26, cyp7/cwf27, cwf28, cwf29/ist3, lea1, msl1, prp5/cwf1, prp10, prp12/sap130, prp17, prp22, sap61, sap62, sap114, sap145, slu7, smb1, smd1, smd3, smf1, smg1 and syf2.

It is found in the nucleus. Required for pre-mRNA splicing and spliceosome assembly. This chain is U2 snRNP component ist3 (cwf29), found in Schizosaccharomyces pombe (strain 972 / ATCC 24843) (Fission yeast).